The following is a 395-amino-acid chain: S-adenosylmethionine synthase (395 aa).

His-12 provides a ligand contact to ATP. Residue Asp-14 participates in Mg(2+) binding. Residue Glu-40 participates in K(+) binding. Glu-53 and Gln-96 together coordinate L-methionine. The flexible loop stretch occupies residues 96-106 (QSKEIADAVNF). Residues 174–176 (DGK), 242–243 (RF), Asp-251, 257–258 (RK), Ala-274, and Lys-278 contribute to the ATP site. Asp-251 contacts L-methionine. L-methionine is bound at residue Lys-282.

Belongs to the AdoMet synthase family. Homotetramer; dimer of dimers. Mg(2+) serves as cofactor. It depends on K(+) as a cofactor.

Its subcellular location is the cytoplasm. The catalysed reaction is L-methionine + ATP + H2O = S-adenosyl-L-methionine + phosphate + diphosphate. It participates in amino-acid biosynthesis; S-adenosyl-L-methionine biosynthesis; S-adenosyl-L-methionine from L-methionine: step 1/1. Functionally, catalyzes the formation of S-adenosylmethionine (AdoMet) from methionine and ATP. The overall synthetic reaction is composed of two sequential steps, AdoMet formation and the subsequent tripolyphosphate hydrolysis which occurs prior to release of AdoMet from the enzyme. In Tropheryma whipplei (strain Twist) (Whipple's bacillus), this protein is S-adenosylmethionine synthase.